Reading from the N-terminus, the 393-residue chain is S-adenosylmethionine synthase (393 aa).

Residue His16 participates in ATP binding. Asp18 contacts Mg(2+). Residue Glu44 coordinates K(+). L-methionine contacts are provided by Glu57 and Gln100. The segment at 100 to 110 (QSNDIAQGVDH) is flexible loop. Residues 167–169 (DAK), 238–239 (RF), Asp247, 253–254 (RK), Ala270, and Lys274 contribute to the ATP site. Asp247 serves as a coordination point for L-methionine. An L-methionine-binding site is contributed by Lys278.

Belongs to the AdoMet synthase family. In terms of assembly, homotetramer; dimer of dimers. Mg(2+) serves as cofactor. K(+) is required as a cofactor.

It is found in the cytoplasm. The enzyme catalyses L-methionine + ATP + H2O = S-adenosyl-L-methionine + phosphate + diphosphate. It participates in amino-acid biosynthesis; S-adenosyl-L-methionine biosynthesis; S-adenosyl-L-methionine from L-methionine: step 1/1. Functionally, catalyzes the formation of S-adenosylmethionine (AdoMet) from methionine and ATP. The overall synthetic reaction is composed of two sequential steps, AdoMet formation and the subsequent tripolyphosphate hydrolysis which occurs prior to release of AdoMet from the enzyme. The protein is S-adenosylmethionine synthase of Albidiferax ferrireducens (strain ATCC BAA-621 / DSM 15236 / T118) (Rhodoferax ferrireducens).